The following is a 250-amino-acid chain: uncharacterized protein (250 aa).

4Fe-4S ferredoxin-type domains follow at residues 38–67, 69–98, 124–153, 154–183, 191–220, and 220–249; these read KLLY…KAKV, KSAK…VIEG, KKYE…AVRR, KSIE…VERE, RDIE…QDGD, and DKVK…MWEK. [4Fe-4S] cluster-binding residues include Cys-47, Cys-50, Cys-53, Cys-57, Cys-78, Cys-81, Cys-84, Cys-88, Cys-133, Cys-136, Cys-139, Cys-143, Cys-163, Cys-166, Cys-169, Cys-173, Cys-200, Cys-203, Cys-206, Cys-210, Cys-229, Cys-232, Cys-235, and Cys-239.

This is an uncharacterized protein from Methanocaldococcus jannaschii (strain ATCC 43067 / DSM 2661 / JAL-1 / JCM 10045 / NBRC 100440) (Methanococcus jannaschii).